A 452-amino-acid chain; its full sequence is Imidazoleglycerol-phosphate dehydratase (452 aa).

The interval 1 to 233 (MASPVQALLL…VGASVVLTPG (233 aa)) is unknown activity. An imidazoleglycerol-phosphate dehydratase region spans residues 234 to 452 (LGELLDLVPA…GVPSTKGVLA (219 aa)).

It belongs to the imidazoleglycerol-phosphate dehydratase family.

The enzyme catalyses D-erythro-1-(imidazol-4-yl)glycerol 3-phosphate = 3-(imidazol-4-yl)-2-oxopropyl phosphate + H2O. Its pathway is amino-acid biosynthesis; L-histidine biosynthesis; L-histidine from 5-phospho-alpha-D-ribose 1-diphosphate: step 6/9. The sequence is that of Imidazoleglycerol-phosphate dehydratase (HIS3) from Phytophthora nicotianae (Potato buckeye rot agent).